A 386-amino-acid chain; its full sequence is CRISPR system endoribonuclease Csm6' (386 aa).

A CARF domain region spans residues 1–146; the sequence is MRVLISAVGD…ASNENIGHDN (146 aa). Residues 147–386 form an HEPN domain region; that stretch reads DENIDELIEV…LNKILLTKLN (240 aa).

It belongs to the CRISPR-associated Csm6 family. In terms of assembly, homodimer. The composite ssRNase active site is formed at the dimer interface.

Non-specific ssRNase activity is stimulated about 1000-fold by cyclic oligoadenylate (cOA), a second messenger produced by Cas10 of the ternary Csm effector complex in the presence of a cognate target RNA. Its function is as follows. CRISPR (clustered regularly interspaced short palindromic repeat) is an adaptive immune system that provides protection against mobile genetic elements (viruses, transposable elements and conjugative plasmids). CRISPR clusters contain spacers, sequences complementary to antecedent mobile elements, and target invading nucleic acids. CRISPR clusters are transcribed and processed into CRISPR RNA (crRNA). The type III-A Csm complex binds crRNA and acts as a crRNA-guided RNase, DNase and cyclic oligoadenylate synthase; binding of target RNA cognate to the crRNA is required for all activities. In a heterologous host this Csm effector complex restricts ssRNA phage MS2, suggesting it may target RNA viruses in vivo. This protein is not part of the Csm complex. In terms of biological role, csm functions as a non-specific ssDNase. Base-pairing between crRNA and target RNA to form a ternary Csm complex activates a ssDNase activity; target RNA cleavage suppresses the ssDNase, a temporal control that prevents uncontrolled DNA degradation. Viral RNA transcripts probably tether the Csm complex to the viral genome, recruiting Cas10 ssDNA activity which is able to degrade DNA in the transcription bubble, spatially controlling the DNase activity. Functionally, a single-strand-specific endoribonuclease (ssRNase) that is approximately 1000-fold stimulated by cyclic oligoadenylate (cOA); although several species of cOA are synthesized by this organism only cyclic hexaadenylate (cA6) stimulates the ssRNase activity. Cleaves preferentially within GA or AA dinucleotides, although the presence of cA6 broadens the preference. This Streptococcus thermophilus protein is CRISPR system endoribonuclease Csm6'.